A 196-amino-acid chain; its full sequence is Protein hunchback (196 aa).

Disordered stretches follow at residues 16–60 (SHHH…NTNL) and 90–196 (AMTP…KYMA). Basic residues predominate over residues 17–30 (HHHHHHHAHHSYHQ). The segment covering 92–103 (TPSSSNNDQNSP) has biased composition (polar residues). Residues 125-144 (PTATTTTTPAAAAPTTTAAT) show a composition bias toward low complexity. The segment covering 176–196 (AEREKEHDLMSNSSEDMKYMA) has biased composition (basic and acidic residues).

It belongs to the hunchback C2H2-type zinc-finger protein family.

Its subcellular location is the nucleus. Functionally, gap class segmentation protein that controls development of head structures. The protein is Protein hunchback (hb) of Drosophila silvestris (Fruit fly).